The sequence spans 82 residues: RNA-binding protein Hfq (82 aa).

In terms of domain architecture, Sm spans 10-70 (DAFLNQVRKD…ISTVAPLRPI (61 aa)).

This sequence belongs to the Hfq family. As to quaternary structure, homohexamer.

In terms of biological role, RNA chaperone that binds small regulatory RNA (sRNAs) and mRNAs to facilitate mRNA translational regulation in response to envelope stress, environmental stress and changes in metabolite concentrations. Also binds with high specificity to tRNAs. In Syntrophomonas wolfei subsp. wolfei (strain DSM 2245B / Goettingen), this protein is RNA-binding protein Hfq.